Here is a 260-residue protein sequence, read N- to C-terminus: O-antigen export system permease protein RfbA (260 aa).

7 helical membrane-spanning segments follow: residues 31 to 51 (FLGFLWTFLNPTLHMLVYVLL), 63 to 83 (FPFFMFVGLLPWIWFSTSVGG), 109 to 129 (VVVTNLCNFVLSLPLMLVLGM), 139 to 159 (VVLFPVVVLIQLTFTLALTYI), 173 to 193 (IVSNLLTLWFFATPVLYPLST), 201 to 221 (SLMLALNPMVSLMTSYQAIFY), and 229 to 249 (EPLMALAAVSVVLLWAASSIF). Residues 32-252 (LGFLWTFLNP…WAASSIFESR (221 aa)) form the ABC transmembrane type-2 domain.

It belongs to the ABC-2 integral membrane protein family.

Its subcellular location is the cell inner membrane. Functionally, may form an ATP-driven O-antigen export apparatus, in association with RfbB. This Myxococcus xanthus protein is O-antigen export system permease protein RfbA (rfbA).